The chain runs to 151 residues: Transcriptional regulator MraZ (151 aa).

SpoVT-AbrB domains are found at residues A5 to E52 and A81 to A124.

The protein belongs to the MraZ family. As to quaternary structure, forms oligomers.

Its subcellular location is the cytoplasm. It localises to the nucleoid. In Pseudomonas putida (strain W619), this protein is Transcriptional regulator MraZ.